A 269-amino-acid chain; its full sequence is Regulatory protein RecX (269 aa).

It belongs to the RecX family.

The protein resides in the cytoplasm. In terms of biological role, modulates RecA activity. The sequence is that of Regulatory protein RecX from Listeria welshimeri serovar 6b (strain ATCC 35897 / DSM 20650 / CCUG 15529 / CIP 8149 / NCTC 11857 / SLCC 5334 / V8).